Consider the following 1072-residue polypeptide: LRR receptor-like serine/threonine-protein kinase RGI5 (1072 aa).

The first 21 residues, methionine 1–alanine 21, serve as a signal peptide directing secretion. The Extracellular portion of the chain corresponds to glutamine 22 to alanine 706. Cysteine 56 and cysteine 63 are oxidised to a cystine. 25 LRR repeats span residues aspartate 66–serine 89, leucine 90–lysine 113, leucine 114–leucine 138, threonine 140–leucine 162, alanine 164–serine 185, valine 187–leucine 211, lysine 212–asparagine 234, leucine 235–cysteine 259, serine 260–leucine 283, lysine 285–cysteine 307, serine 308–leucine 331, valine 332–cysteine 355, serine 356–leucine 379, serine 381–asparagine 402, cysteine 403–leucine 427, arginine 429–cysteine 451, glutamine 452–leucine 475, asparagine 477–isoleucine 499, threonine 500–leucine 523, valine 524–asparagine 546, serine 548–leucine 571, glutamine 572–valine 595, serine 597–aspartate 619, leucine 620–serine 642, and leucine 643–lysine 667. 3 N-linked (GlcNAc...) asparagine glycosylation sites follow: asparagine 80, asparagine 97, and asparagine 102. The Small peptide recognition motif lies at glutamine 171 to aspartate 172. Residue asparagine 176 is glycosylated (N-linked (GlcNAc...) asparagine). The Small peptide recognition signature appears at arginine 193–glycine 196. The N-linked (GlcNAc...) asparagine glycan is linked to asparagine 213. Short sequence motifs (small peptide recognition) lie at residues threonine 216–alanine 221, tyrosine 244, and tyrosine 266–histidine 268. An N-linked (GlcNAc...) asparagine glycan is attached at asparagine 306. Short sequence motifs (small peptide recognition) lie at residues aspartate 314 to alanine 317 and glutamine 336 to glutamine 338. N-linked (GlcNAc...) asparagine glycosylation is present at asparagine 354. Positions serine 384–tryptophan 388 match the Small peptide recognition motif. N-linked (GlcNAc...) asparagine glycosylation occurs at asparagine 402. 3 consecutive short sequence motifs (small peptide recognition) follow at residues aspartate 410–arginine 413, lysine 432–leucine 436, and arginine 456–arginine 458. An N-linked (GlcNAc...) asparagine glycan is attached at asparagine 498. Asparagine 546 carries N-linked (GlcNAc...) asparagine glycosylation. Residues asparagine 650 and asparagine 655 are each glycosylated (N-linked (GlcNAc...) asparagine). The chain crosses the membrane as a helical span at residues leucine 707–leucine 727. Over arginine 728 to serine 1072 the chain is Cytoplasmic. At threonine 764 the chain carries Phosphothreonine. Positions leucine 772–isoleucine 1067 constitute a Protein kinase domain. Residues isoleucine 778–valine 786 and lysine 800 each bind ATP. A phosphotyrosine mark is found at tyrosine 851 and tyrosine 887. Aspartate 900 acts as the Proton acceptor in catalysis. The residue at position 936 (serine 936) is a Phosphoserine. 2 positions are modified to phosphotyrosine: tyrosine 944 and tyrosine 951. The residue at position 952 (threonine 952) is a Phosphothreonine.

Belongs to the protein kinase superfamily. Ser/Thr protein kinase family. As to quaternary structure, binds to RGF1; this interaction triggers the formation of heterodimers with SERK1. In terms of processing, phosphorylated and ubiquitinated upon interaction with RGF1, thus leading to activation a subsequent degradation. Autophosphorylated. In terms of tissue distribution, expressed in roots and hypocotyls.

It is found in the membrane. The enzyme catalyses L-seryl-[protein] + ATP = O-phospho-L-seryl-[protein] + ADP + H(+). It catalyses the reaction L-threonyl-[protein] + ATP = O-phospho-L-threonyl-[protein] + ADP + H(+). Functionally, together with RGI1, RGI2, RGI3 and RGI4, acts as a receptor of RGF1, a peptide hormone that maintains the postembryonic root stem cell niche by regulating the expression levels and patterns of the transcription factor PLETHORA (PLT). Links RGF1 signal with its downstream components. In Arabidopsis thaliana (Mouse-ear cress), this protein is LRR receptor-like serine/threonine-protein kinase RGI5.